The following is a 411-amino-acid chain: Kelch domain-containing protein 10 (411 aa).

6 Kelch repeats span residues 72 to 133 (NLYV…LHGH), 135 to 186 (LLVF…IIHG), 187 to 239 (FLYV…HDGQ), 240 to 288 (RIYV…RRCH), 296 to 342 (EVFI…AVTP), and 345 to 388 (CMYI…YFPQ).

The protein belongs to the KLHDC10 family. As to quaternary structure, component of a CRL2 E3 ubiquitin-protein ligase complex, also named ECS (Elongin BC-CUL2/5-SOCS-box protein) complex, composed of CUL2, Elongin BC (ELOB and ELOC), RBX1 and substrate-specific adapter KLHDC10.

It participates in protein modification; protein ubiquitination. Its function is as follows. Substrate-recognition component of a Cul2-RING (CRL2) E3 ubiquitin-protein ligase complex of the DesCEND (destruction via C-end degrons) pathway, which recognizes a C-degron located at the extreme C terminus of target proteins, leading to their ubiquitination and degradation. The C-degron recognized by the DesCEND pathway is usually a motif of less than ten residues and can be present in full-length proteins, truncated proteins or proteolytically cleaved forms. The CRL2(KLHDC10) complex specifically recognizes proteins with a proline-glycine (Pro-Gly) or an alanine tail (CAT tail) at the C-terminus, leading to their ubiquitination and degradation. The CRL2(KLHDC10) complex is involved in the ribosome-associated quality control (RQC) pathway, which mediates the extraction of incompletely synthesized nascent chains from stalled ribosomes: CRL2(KLHDC10) acts downstream of NEMF and recognizes CAT tails associated with stalled nascent chains, leading to their ubiquitination and degradation. The polypeptide is Kelch domain-containing protein 10 (Xenopus laevis (African clawed frog)).